Reading from the N-terminus, the 494-residue chain is Guanosine-5'-triphosphate,3'-diphosphate pyrophosphatase (494 aa).

It belongs to the GppA/Ppx family. GppA subfamily.

It catalyses the reaction guanosine 3'-diphosphate 5'-triphosphate + H2O = guanosine 3',5'-bis(diphosphate) + phosphate + H(+). Its pathway is purine metabolism; ppGpp biosynthesis; ppGpp from GTP: step 2/2. In terms of biological role, catalyzes the conversion of pppGpp to ppGpp. Guanosine pentaphosphate (pppGpp) is a cytoplasmic signaling molecule which together with ppGpp controls the 'stringent response', an adaptive process that allows bacteria to respond to amino acid starvation, resulting in the coordinated regulation of numerous cellular activities. This chain is Guanosine-5'-triphosphate,3'-diphosphate pyrophosphatase, found in Shigella flexneri serotype 5b (strain 8401).